Here is a 751-residue protein sequence, read N- to C-terminus: Zinc finger protein 184 (751 aa).

One can recognise a KRAB domain in the interval 28-99; sequence VTFKDVIVDF…EPSIPVGTCA (72 aa). Residues serine 117, serine 122, and serine 199 each carry the phosphoserine modification. Residues 191–202 are compositionally biased toward polar residues; it reads SNLVTQEPSPEE. Positions 191–212 are disordered; it reads SNLVTQEPSPEETSTKRSIKQN. A Glycyl lysine isopeptide (Lys-Gly) (interchain with G-Cter in SUMO2) cross-link involves residue lysine 206. 19 C2H2-type zinc fingers span residues 222–244, 250–272, 278–300, 306–328, 334–356, 362–384, 390–412, 418–440, 446–468, 474–496, 502–524, 530–552, 558–580, 586–608, 614–636, 642–664, 670–692, 698–720, and 726–748; these read CKCN…QRTH, YKCN…QRIH, YKCD…QRIH, YTCN…QKIH, FKCD…QKIH, YKCN…HMIH, YECN…QKTH, YDCA…LKIH, YKCN…RRIH, FECS…QKTH, YECK…ERIH, YQCH…RKIH, YKCN…KRIH, YECA…QKTH, YQCN…QRIH, YKCN…QNTH, YNCN…QRIH, and FGCN…QRLH.

It belongs to the krueppel C2H2-type zinc-finger protein family. In terms of tissue distribution, predominant expression in testis.

Its subcellular location is the nucleus. Functionally, may be involved in transcriptional regulation. This Homo sapiens (Human) protein is Zinc finger protein 184 (ZNF184).